The chain runs to 348 residues: Ion-translocating oxidoreductase complex subunit D (348 aa).

Transmembrane regions (helical) follow at residues 23–43 (WVLACALPGLIAQTYFFGYGT), 44–64 (LIQLLLAISVAVALEAGIMLL), 72–91 (ALRDYSAVVTAWLLAVAIPP), and 126–146 (IAYVVLLISFPVQMTSWMAPI). Threonine 187 is subject to FMN phosphoryl threonine. Transmembrane regions (helical) follow at residues 214–234 (FAGIGWEWVNIAYLLGGLILL), 243–263 (IPMAMLAGLVFTALLAQLFAP), 266–286 (TASPMIHLLSGATMLGAFFIA), 300–320 (LIYGFFIGAMVFLIRSWGGFP), and 321–341 (DGVAFAVLLANMCVPLIDYYT).

This sequence belongs to the NqrB/RnfD family. The complex is composed of six subunits: RnfA, RnfB, RnfC, RnfD, RnfE and RnfG. FMN is required as a cofactor.

It localises to the cell inner membrane. Functionally, part of a membrane-bound complex that couples electron transfer with translocation of ions across the membrane. This chain is Ion-translocating oxidoreductase complex subunit D, found in Vibrio cholerae serotype O1 (strain ATCC 39315 / El Tor Inaba N16961).